We begin with the raw amino-acid sequence, 86 residues long: Cell division topological specificity factor (86 aa).

The protein belongs to the MinE family.

In terms of biological role, prevents the cell division inhibition by proteins MinC and MinD at internal division sites while permitting inhibition at polar sites. This ensures cell division at the proper site by restricting the formation of a division septum at the midpoint of the long axis of the cell. The polypeptide is Cell division topological specificity factor (Alteromonas mediterranea (strain DSM 17117 / CIP 110805 / LMG 28347 / Deep ecotype)).